The primary structure comprises 640 residues: SH3 domain-containing protein 21 (640 aa).

The disordered stretch occupies residues methionine 1–tyrosine 60. The SH3 domain occupies serine 65–proline 126. Disordered stretches follow at residues arginine 133–aspartate 361, tyrosine 401–glutamine 551, and valine 618–tyrosine 640. The segment covering proline 177 to serine 186 has biased composition (basic and acidic residues). A compositionally biased stretch (polar residues) spans threonine 210–serine 220. 3 stretches are compositionally biased toward basic and acidic residues: residues tyrosine 401–threonine 416, alanine 459–alanine 469, and arginine 494–proline 532. Residues valine 572–lysine 626 are a coiled coil. The span at methionine 621 to tyrosine 640 shows a compositional bias: polar residues.

This Homo sapiens (Human) protein is SH3 domain-containing protein 21 (SH3D21).